Here is a 169-residue protein sequence, read N- to C-terminus: Major fimbrial subunit SMF-1 (169 aa).

Residues 1 to 11 (MLAAAPLAANA) form the signal peptide.

It belongs to the fimbrial protein family.

It localises to the fimbrium. Functionally, involved in adherence to eukaryotic epithelial cells and abiotic surfaces. Mediates agglutination of animal red blood cells. This Stenotrophomonas maltophilia (strain K279a) protein is Major fimbrial subunit SMF-1.